We begin with the raw amino-acid sequence, 296 residues long: (+)-neomenthol dehydrogenase (296 aa).

16-40 is an NADP(+) binding site; the sequence is RGIGFEICRQLASEGIRVVLTSRDE. Residue S164 coordinates substrate. The Proton acceptor role is filled by Y220.

This sequence belongs to the short-chain dehydrogenases/reductases (SDR) family. Monomer.

The protein localises to the cytoplasm. The enzyme catalyses (+)-neomenthol + NADP(+) = (1R,4S)-menthone + NADPH + H(+). Functionally, aldehyde reductase that catalyzes the reduction of the aldehyde carbonyl groups on saturated and alpha,beta-unsaturated aldehydes with more than 5 carbons. Involved in basal resistance against pathogens. This Arabidopsis thaliana (Mouse-ear cress) protein is (+)-neomenthol dehydrogenase (SDR1).